The primary structure comprises 222 residues: 3-demethoxyubiquinol 3-hydroxylase (222 aa).

Fe cation contacts are provided by Glu71, Glu101, His104, Glu153, Glu185, and His188.

This sequence belongs to the COQ7 family. The cofactor is Fe cation.

Its subcellular location is the cell membrane. The catalysed reaction is a 5-methoxy-2-methyl-3-(all-trans-polyprenyl)benzene-1,4-diol + AH2 + O2 = a 3-demethylubiquinol + A + H2O. It participates in cofactor biosynthesis; ubiquinone biosynthesis. Catalyzes the hydroxylation of 2-nonaprenyl-3-methyl-6-methoxy-1,4-benzoquinol during ubiquinone biosynthesis. This is 3-demethoxyubiquinol 3-hydroxylase from Bordetella bronchiseptica (strain ATCC BAA-588 / NCTC 13252 / RB50) (Alcaligenes bronchisepticus).